The following is a 245-amino-acid chain: Acyl-protein thioesterase 1 (245 aa).

Catalysis depends on charge relay system residues Ser126, Asp182, and His214.

It belongs to the AB hydrolase superfamily. AB hydrolase 2 family.

It is found in the cytoplasm. The protein localises to the nucleus. It catalyses the reaction S-hexadecanoyl-L-cysteinyl-[protein] + H2O = L-cysteinyl-[protein] + hexadecanoate + H(+). Functionally, hydrolyzes fatty acids from S-acylated cysteine residues in proteins with a strong preference for palmitoylated G-alpha proteins over other acyl substrates. Mediates the deacylation of G-alpha proteins such as GPA1 in vivo, but has weak or no activity toward palmitoylated Ras proteins. Has weak lysophospholipase activity in vitro; however such activity may not exist in vivo. The protein is Acyl-protein thioesterase 1 of Neurospora crassa (strain ATCC 24698 / 74-OR23-1A / CBS 708.71 / DSM 1257 / FGSC 987).